We begin with the raw amino-acid sequence, 609 residues long: Arginine--tRNA ligase (609 aa).

Residues 132 to 142 (ANPTSSLHVGH) carry the 'HIGH' region motif.

This sequence belongs to the class-I aminoacyl-tRNA synthetase family. In terms of assembly, monomer.

The protein resides in the cytoplasm. The catalysed reaction is tRNA(Arg) + L-arginine + ATP = L-arginyl-tRNA(Arg) + AMP + diphosphate. The protein is Arginine--tRNA ligase of Psychrobacter cryohalolentis (strain ATCC BAA-1226 / DSM 17306 / VKM B-2378 / K5).